Consider the following 230-residue polypeptide: Potassium/proton antiporter CemA (230 aa).

Transmembrane regions (helical) follow at residues 7–27, 107–127, 145–165, and 181–201; these read LPSLLYLVFIVLLPWGVSSSF, ILHFSTNIICLAILSGSFFLG, LNDSIKAFFILLVTDFFVGFH, and FGWAPNELIFTIFVCSFPVIL.

The protein belongs to the CemA family.

It localises to the plastid. Its subcellular location is the chloroplast inner membrane. It catalyses the reaction K(+)(in) + H(+)(out) = K(+)(out) + H(+)(in). In terms of biological role, contributes to K(+)/H(+) antiport activity by supporting proton efflux to control proton extrusion and homeostasis in chloroplasts in a light-dependent manner to modulate photosynthesis. Prevents excessive induction of non-photochemical quenching (NPQ) under continuous-light conditions. Indirectly promotes efficient inorganic carbon uptake into chloroplasts. This chain is Potassium/proton antiporter CemA, found in Triticum aestivum (Wheat).